The primary structure comprises 439 residues: MFFKTLKEAFKVKDVRARILFTIFILFVFRLGAHITVPGVNVQNLTEVSNLPFLNMMNLVSGNAMQNYSLFAMGVSPYITASIIVQLLQMDILPKFVEWSKQGEIGRRKLNQATRYITLVLAMAQSIGITAGFQAMSSLNIVQNPNWQSYLMIGAILTTGSMVVTWMGEQINEKGFGSGVSVIIFAGIVSSIPSAVKSVYDEKFLNVRPSEIPMSWLFVIGLVLSAIIIIYVTTFVQQAERKVPIQYTKLTQGAPTSSYLPLRVNPAGVIPVIFAGSITTAPATILQFLQRSQGSNVGWLSTLQDALSYTTWTGMLFYALLIVLFTFFYSFVQVNPEKMAENLQKQGSYIPSVRPGKGTEKYVSRLLMRLATVGALFLGLISIIPIAAQNVWGLPKIVALGGTSLLILIQVAIQAVKQLEGYLLKRKYAGFMDNPLETK.

10 consecutive transmembrane segments (helical) span residues 19–39 (ILFT…TVPG), 68–88 (YSLF…VQLL), 116–136 (YITL…FQAM), 151–171 (LMIG…GEQI), 176–196 (FGSG…PSAV), 216–236 (WLFV…TTFV), 269–289 (VIPV…LQFL), 312–332 (WTGM…YSFV), 373–393 (VGAL…NVWG), and 396–416 (KIVA…IQAV).

This sequence belongs to the SecY/SEC61-alpha family. As to quaternary structure, component of the Sec protein translocase complex. Heterotrimer consisting of SecY, SecE and SecG subunits. The heterotrimers can form oligomers, although 1 heterotrimer is thought to be able to translocate proteins. Interacts with the ribosome. Interacts with SecDF, and other proteins may be involved. Interacts with SecA.

It localises to the cell membrane. Its function is as follows. The central subunit of the protein translocation channel SecYEG. Consists of two halves formed by TMs 1-5 and 6-10. These two domains form a lateral gate at the front which open onto the bilayer between TMs 2 and 7, and are clamped together by SecE at the back. The channel is closed by both a pore ring composed of hydrophobic SecY resides and a short helix (helix 2A) on the extracellular side of the membrane which forms a plug. The plug probably moves laterally to allow the channel to open. The ring and the pore may move independently. The protein is Protein translocase subunit SecY of Lactococcus lactis subsp. lactis (strain IL1403) (Streptococcus lactis).